A 256-amino-acid chain; its full sequence is Putative transposase for insertion sequence element IS112 (256 aa).

The protein belongs to the transposase 11 family.

In terms of biological role, involved in the transposition of the insertion sequence IS112 which inactivates the SalI restriction-modification system. In Streptomyces albus G, this protein is Putative transposase for insertion sequence element IS112.